Consider the following 98-residue polypeptide: ESAT-6-like protein EsxJ (98 aa).

The protein belongs to the WXG100 family. CFP-10 subfamily.

Its subcellular location is the secreted. The chain is ESAT-6-like protein EsxJ from Mycobacterium bovis (strain ATCC BAA-935 / AF2122/97).